Consider the following 544-residue polypeptide: Aspartokinase 2, chloroplastic (544 aa).

Residues 1 to 84 (MASLQLYGVK…SSGTGKELTC (84 aa)) constitute a chloroplast transit peptide. 3 residues coordinate ATP: lysine 87, glycine 90, and serine 119. A substrate-binding site is contributed by glutamate 203. 2 ACT domains span residues 401–479 (IAST…RRSI) and 481–544 (SLIG…ETDP).

This sequence belongs to the aspartokinase family. In terms of tissue distribution, expressed in stems, leaves, floral organs and young seedlings.

It is found in the plastid. It localises to the chloroplast. The catalysed reaction is L-aspartate + ATP = 4-phospho-L-aspartate + ADP. It functions in the pathway amino-acid biosynthesis; L-lysine biosynthesis via DAP pathway; (S)-tetrahydrodipicolinate from L-aspartate: step 1/4. The protein operates within amino-acid biosynthesis; L-methionine biosynthesis via de novo pathway; L-homoserine from L-aspartate: step 1/3. It participates in amino-acid biosynthesis; L-threonine biosynthesis; L-threonine from L-aspartate: step 1/5. Allosterically inhibited by lysine, but not by S-adenosyl-L-methionine (SAM). K(0.5) for lysine in the presence of physiological concentrations of substrates is 12.5 uM. No inhibition by threonine or leucine and no activation or inhibition by alanine, cysteine, isoleucine, serine, valine, methionine, glutamine, asparagine, glutamic acid or arginine. Involved in the first step of essential amino acids lysine, threonine, methionine and isoleucine synthesis via the aspartate-family pathway. This chain is Aspartokinase 2, chloroplastic (AK2), found in Arabidopsis thaliana (Mouse-ear cress).